A 173-amino-acid polypeptide reads, in one-letter code: CASP-like protein 2D1 (173 aa).

The Cytoplasmic segment spans residues 1–9 (MAPLLKLLD). A helical membrane pass occupies residues 10 to 29 (SSLRVSVIPLSAATIWLTVT). Topologically, residues 30-50 (NHQDNSSYGNLKYSNIMGLKY) are extracellular. Asparagine 34 carries N-linked (GlcNAc...) asparagine glycosylation. A helical membrane pass occupies residues 51–71 (MVCISAICASYAFVAAVSIWI). Residues 72–86 (KCLVNKVWLFFVSDQ) lie on the Cytoplasmic side of the membrane. Residues 87–107 (IIAYLMVTSVAAAMEILYIAY) form a helical membrane-spanning segment. At 108 to 131 (NGDQKVTWSEACTSYGKFCNGMKT) the chain is on the extracellular side. Residues 132–152 (ALILHALTLCFFIVLAVISAY) traverse the membrane as a helical segment. The Cytoplasmic portion of the chain corresponds to 153–173 (RAFSMYQPPVSSKETVEGDAT).

The protein belongs to the Casparian strip membrane proteins (CASP) family. In terms of assembly, homodimer and heterodimers.

The protein resides in the cell membrane. The protein is CASP-like protein 2D1 of Ricinus communis (Castor bean).